A 337-amino-acid polypeptide reads, in one-letter code: GTP 3',8-cyclase (337 aa).

In terms of domain architecture, Radical SAM core spans 18-242 (NFGRRFHYLR…DKADILDGPA (225 aa)). Arg-27 is a GTP binding site. [4Fe-4S] cluster-binding residues include Cys-34 and Cys-38. Tyr-40 contacts S-adenosyl-L-methionine. Residue Cys-41 participates in [4Fe-4S] cluster binding. Arg-76 provides a ligand contact to GTP. Gly-80 lines the S-adenosyl-L-methionine pocket. Position 107 (Thr-107) interacts with GTP. Residue Ser-131 coordinates S-adenosyl-L-methionine. Lys-168 contributes to the GTP binding site. Met-202 is a binding site for S-adenosyl-L-methionine. [4Fe-4S] cluster is bound by residues Cys-265 and Cys-268. A GTP-binding site is contributed by 270 to 272 (RLR). Cys-282 contacts [4Fe-4S] cluster.

The protein belongs to the radical SAM superfamily. MoaA family. Monomer and homodimer. It depends on [4Fe-4S] cluster as a cofactor.

It catalyses the reaction GTP + AH2 + S-adenosyl-L-methionine = (8S)-3',8-cyclo-7,8-dihydroguanosine 5'-triphosphate + 5'-deoxyadenosine + L-methionine + A + H(+). It functions in the pathway cofactor biosynthesis; molybdopterin biosynthesis. Catalyzes the cyclization of GTP to (8S)-3',8-cyclo-7,8-dihydroguanosine 5'-triphosphate. The polypeptide is GTP 3',8-cyclase (Shewanella denitrificans (strain OS217 / ATCC BAA-1090 / DSM 15013)).